A 251-amino-acid polypeptide reads, in one-letter code: Uridylate kinase (251 aa).

ATP is bound at residue 11–14 (KLSG). Positions 19–24 (GNQGFG) are involved in allosteric activation by GTP. Glycine 53 is a binding site for UMP. Residues glycine 54 and arginine 58 each contribute to the ATP site. UMP contacts are provided by residues aspartate 73 and 134-141 (TGNPYFTT). The ATP site is built by threonine 161, tyrosine 167, and aspartate 170.

This sequence belongs to the UMP kinase family. In terms of assembly, homohexamer.

The protein localises to the cytoplasm. It catalyses the reaction UMP + ATP = UDP + ADP. It participates in pyrimidine metabolism; CTP biosynthesis via de novo pathway; UDP from UMP (UMPK route): step 1/1. Its activity is regulated as follows. Allosterically activated by GTP. Inhibited by UTP. Its function is as follows. Catalyzes the reversible phosphorylation of UMP to UDP. In Protochlamydia amoebophila (strain UWE25), this protein is Uridylate kinase.